Reading from the N-terminus, the 411-residue chain is Immunity-related GTPase family M protein (411 aa).

A disordered region spans residues 1 to 21 (MKPSHKSCEAAPLLPKMPETS). In terms of domain architecture, IRG-type G spans 77–253 (IPVSIFVTGD…PELRNTLQTD (177 aa)). Residues 86–93 (DSGNGMSS), 111–115 (TGVVR), and 193–195 (KLD) each bind GTP. At Ser-204 the chain carries Phosphoserine. 234–236 (SNL) lines the GTP pocket. Lys-272 is covalently cross-linked (Glycyl lysine isopeptide (Lys-Gly) (interchain with G-Cter in ubiquitin)). The alpha-K amphipathic helix stretch occupies residues 352–376 (KLRLMTCTTVNALFCLFKFLPCLCH).

This sequence belongs to the TRAFAC class dynamin-like GTPase superfamily. IRG family. As to quaternary structure, interacts with ULK1; promoting the coassembly of ULK1 and BECN1. Interacts with BECN1; enhancing BECN1-interacting partners and influencing the composition of the BECN1 complex. Interacts with ATG16L1. Interacts with NOD2; promoting Irgm 'Lys-63'-linked polyubiquitination, which is required for interactions with the core autophagy factors. Interacts with STX17; promoting STX17 recruitment to autophagosomes. Interacts with ATG8 proteins (GABARAP, GABARAPL1, GABARAPL2, MAP1LC3A, MAP1LC3B and MAP1LC3C); promoting STX17 recruitment to autophagosomes. Interacts with TFEB; promoting association between TFEB and PPP3CB and TFEB dephosphorylation. Interacts with PPP3CB; promoting association between TFEB and PPP3CB and TFEB dephosphorylation. Interacts with NLRP3; preventing NLRP3 inflammasome assembly and promoting SQSTM1/p62-dependent autophagic degradation of NLRP3. Interacts with CGAS; promoting SQSTM1/p62-dependent autophagic degradation of CGAS. Interacts with RIGI/RIG-I; promoting SQSTM1/p62-dependent autophagic degradation of RIGI/RIG-I. Interacts with NOD1; promoting SQSTM1/p62-dependent autophagic degradation of RIGI/RIG-I. Interacts with NOD2; promoting SQSTM1/p62-dependent autophagic degradation of RIGI/RIG-I. Interacts with RIPK2; promoting SQSTM1/p62-dependent autophagic degradation of RIGI/RIG-I. Interacts with PIK3CA. In terms of processing, palmitoylated on C-terminal Cys residues. Palmitoylation, together with the alpha-K amphipathic helix, which binds phosphatidylinositol, mediate binding to membranes. Ubiquitinated via 'Lys-63'-linked polyubiquitination in a NOD2-dependent process. 'Lys-63'-linked polyubiquitination is required for interactions with the core autophagy factors. Ubiquitination at Lys-272 by the DCX(WDR77) complex, also named CLR4(WDR77) complex, in intestinal cells, leading to its degradation by the proteasome.

It localises to the golgi apparatus membrane. The protein resides in the cell membrane. The protein localises to the cytoplasmic vesicle. Its subcellular location is the phagosome membrane. It is found in the autophagosome membrane. It localises to the lysosome membrane. The protein resides in the late endosome membrane. The protein localises to the mitochondrion membrane. Its subcellular location is the cell projection. It is found in the phagocytic cup. It catalyses the reaction GTP + H2O = GDP + phosphate + H(+). Functionally, immunity-related GTPase that plays important roles in innate immunity and inflammatory response. Acts as a dynamin-like protein that binds to intracellular membranes and promotes remodeling and trafficking of those membranes. Required for clearance of acute protozoan and bacterial infections by interacting with autophagy and lysosome regulatory proteins, thereby promoting the fusion of phagosomes with lysosomes for efficient degradation of cargo including microbes. Regulates selective autophagy, including xenophagy and mitophagy, both directly and indirectly. Directly regulates autophagy by acting as a molecular adapter that promotes the coassembly of the core autophagy machinery to mediate antimicrobial defense: Irgm (1) activates AMPK, which in turn phosphorylates ULK1 and BECN1 to induce autophagy, (2) promotes the coassembly of ULK1 and BECN1, enhancing BECN1-interacting partners and (3) influences the composition of the BECN1 complex, by competing with the negative regulators BCL2 and RUBCN, to trigger autophagy. Also activates autophagy by promoting recruitment of STX17 to autophagosomes. In collaboration with ATG8 proteins, regulate lysosomal biogenesis, a fundamental process for any autophagic pathway, by promoting TFEB dephosphorylation. Also modulates autophagy by assisting with autophagosome formation and preventing lysosomal deacidification. Regulates autophagy by affecting mitochondrial fusion and fission. Also involved in M1 macrophage activation for the production of proinflammatory cytokines. While activating autophagy, acts as a key negative regulator of the inflammatory and interferon responses both by (1) promoting mitophagy and (2) mediating autophagy-dependent degradation of effectors of the inflammatory response. Promotes degradation of damaged and IFNG/IFN-gamma-stressed mitochondria via mitophagy, preventing cytosolic release of ligands that activate inflammation. Negatively regulates interferon-signaling in hematopoietic stem cells, preserving hematopoietic stem cell number and function. Promotes expansion of activated CD4(+) T-cells by inhibiting IFNG/IFN-gamma signaling, thereby preventing Ifng-mediated cell death of CD4(+) T-cells. Acts as a suppressor of inflammation by promoting recruitment of inflammation effectors, such as CGAS, RIGI/RIG-I and NLRP3, to autophagosome membranes, leading to their SQSTM1/p62-dependent autophagic degradation. Also directly inhibits assembly of the NLRP3 inflammasome by preventing the association between NLRP3 and PYCARD. Acts as a negative regulator of antiviral innate immune response by suppressing the RIPK2-dependent pro-inflammatory response: mediates recruitment of RIPosomes, composed of RIPK2 and NOD1 or NOD2, to autophagosome membranes, promoting their SQSTM1/p62-dependent autophagic degradation. This is Immunity-related GTPase family M protein from Rattus norvegicus (Rat).